Reading from the N-terminus, the 322-residue chain is Beta-ketoacyl-[acyl-carrier-protein] synthase III (322 aa).

Catalysis depends on residues cysteine 113 and histidine 249. The interval glutamine 250 to arginine 254 is ACP-binding. Asparagine 279 is an active-site residue.

The protein belongs to the thiolase-like superfamily. FabH family. In terms of assembly, homodimer.

The protein resides in the cytoplasm. It catalyses the reaction malonyl-[ACP] + acetyl-CoA + H(+) = 3-oxobutanoyl-[ACP] + CO2 + CoA. The protein operates within lipid metabolism; fatty acid biosynthesis. Its function is as follows. Catalyzes the condensation reaction of fatty acid synthesis by the addition to an acyl acceptor of two carbons from malonyl-ACP. Catalyzes the first condensation reaction which initiates fatty acid synthesis and may therefore play a role in governing the total rate of fatty acid production. Possesses both acetoacetyl-ACP synthase and acetyl transacylase activities. Its substrate specificity determines the biosynthesis of branched-chain and/or straight-chain of fatty acids. The polypeptide is Beta-ketoacyl-[acyl-carrier-protein] synthase III (Anaplasma marginale (strain St. Maries)).